Reading from the N-terminus, the 249-residue chain is Coproheme decarboxylase (249 aa).

Fe-coproporphyrin III is bound by residues arginine 131, 145 to 149 (YPMDK), histidine 172, glutamine 185, and serine 223. Residue tyrosine 145 is part of the active site.

Belongs to the ChdC family. Type 1 subfamily. Fe-coproporphyrin III serves as cofactor.

The enzyme catalyses Fe-coproporphyrin III + 2 H2O2 + 2 H(+) = heme b + 2 CO2 + 4 H2O. It catalyses the reaction Fe-coproporphyrin III + H2O2 + H(+) = harderoheme III + CO2 + 2 H2O. It carries out the reaction harderoheme III + H2O2 + H(+) = heme b + CO2 + 2 H2O. It participates in porphyrin-containing compound metabolism; protoheme biosynthesis. Involved in coproporphyrin-dependent heme b biosynthesis. Catalyzes the decarboxylation of Fe-coproporphyrin III (coproheme) to heme b (protoheme IX), the last step of the pathway. The reaction occurs in a stepwise manner with a three-propionate intermediate. The sequence is that of Coproheme decarboxylase from Shouchella clausii (strain KSM-K16) (Alkalihalobacillus clausii).